A 247-amino-acid chain; its full sequence is ATP synthase subunit a, chloroplastic (247 aa).

The next 5 helical transmembrane spans lie at Gln38–Val58, Val95–Leu115, Ile134–Thr154, Leu199–Leu219, and Gly220–Gly240.

It belongs to the ATPase A chain family. In terms of assembly, F-type ATPases have 2 components, CF(1) - the catalytic core - and CF(0) - the membrane proton channel. CF(1) has five subunits: alpha(3), beta(3), gamma(1), delta(1), epsilon(1). CF(0) has four main subunits: a, b, b' and c.

It is found in the plastid. It localises to the chloroplast thylakoid membrane. Functionally, key component of the proton channel; it plays a direct role in the translocation of protons across the membrane. The protein is ATP synthase subunit a, chloroplastic of Morus indica (Mulberry).